The primary structure comprises 20 residues: Brevinin-1DYa (20 aa).

Cysteines 14 and 20 form a disulfide.

Expressed by the skin glands.

Its subcellular location is the secreted. Functionally, antimicrobial peptide. Has low activity against the Gram-positive bacterium S.aureus and the Gram-negative bacterium E.coli (MIC&lt;15 uM). Has a strong hemolytic activity. This chain is Brevinin-1DYa, found in Rana dybowskii (Dybovsky's frog).